The sequence spans 495 residues: Putative aldehyde dehydrogenase AldA (495 aa).

NAD(+) is bound at residue 212 to 218 (GKGSESG). Catalysis depends on residues Glu256 and Cys290.

It belongs to the aldehyde dehydrogenase family.

It carries out the reaction an aldehyde + NAD(+) + H2O = a carboxylate + NADH + 2 H(+). In Staphylococcus aureus (strain USA300), this protein is Putative aldehyde dehydrogenase AldA (aldA).